A 441-amino-acid polypeptide reads, in one-letter code: Glutamyl-tRNA reductase (441 aa).

Substrate is bound by residues 47–50 (TCNR), Ser110, 115–117 (ERE), and Gln121. Cys48 (nucleophile) is an active-site residue. An NADP(+)-binding site is contributed by 192 to 197 (GTGAYA).

Belongs to the glutamyl-tRNA reductase family. Homodimer.

It catalyses the reaction (S)-4-amino-5-oxopentanoate + tRNA(Glu) + NADP(+) = L-glutamyl-tRNA(Glu) + NADPH + H(+). It functions in the pathway porphyrin-containing compound metabolism; protoporphyrin-IX biosynthesis; 5-aminolevulinate from L-glutamyl-tRNA(Glu): step 1/2. In terms of biological role, catalyzes the NADPH-dependent reduction of glutamyl-tRNA(Glu) to glutamate 1-semialdehyde (GSA). The protein is Glutamyl-tRNA reductase of Pseudarthrobacter chlorophenolicus (strain ATCC 700700 / DSM 12829 / CIP 107037 / JCM 12360 / KCTC 9906 / NCIMB 13794 / A6) (Arthrobacter chlorophenolicus).